Consider the following 200-residue polypeptide: Large ribosomal subunit protein uL4 (200 aa).

Residues 38 to 73 (GRQGTKGQKSRSDVSGGGKRPWRQKGTGRARAGTTR) are disordered.

This sequence belongs to the universal ribosomal protein uL4 family. In terms of assembly, part of the 50S ribosomal subunit.

Functionally, one of the primary rRNA binding proteins, this protein initially binds near the 5'-end of the 23S rRNA. It is important during the early stages of 50S assembly. It makes multiple contacts with different domains of the 23S rRNA in the assembled 50S subunit and ribosome. Forms part of the polypeptide exit tunnel. This is Large ribosomal subunit protein uL4 from Ectopseudomonas mendocina (strain ymp) (Pseudomonas mendocina).